Consider the following 202-residue polypeptide: Endothelin-1 (202 aa).

An N-terminal signal peptide occupies residues M1–G25. Residues A26–S50 constitute a propeptide that is removed on maturation. 2 disulfide bridges follow: C53/C67 and C55/C63. A propeptide spanning residues V74 to H202 is cleaved from the precursor. Residues C110 to C124 form an endothelin-like region.

This sequence belongs to the endothelin/sarafotoxin family. Highest expression in the adult is in lung. Lower levels found in heart, kidney, brain and intestine. In the embryo, expressed in outer and inner pharyngeal arch surfaces. Also expressed in endothelium of dorsal aorta and arch arteries, and in epithelium of pharyngeal pouches.

It is found in the secreted. Endothelins are endothelium-derived vasoconstrictor peptides. Probable ligand for G-protein coupled receptors EDNRA and EDNRB which activates PTK2B, BCAR1, BCAR3 and, GTPases RAP1 and RHOA cascade in glomerular mesangial cells. Also binds the DEAR/FBXW7-AS1 receptor. Promotes mesenteric arterial wall remodeling via activation of ROCK signaling and subsequent colocalization of NFATC3 with F-actin filaments. NFATC3 then translocates to the nucleus where it subsequently promotes the transcription of the smooth muscle hypertrophy and differentiation marker ACTA2. The protein is Endothelin-1 (Edn1) of Mus musculus (Mouse).